The chain runs to 284 residues: Shikimate dehydrogenase (NADP(+)) (284 aa).

Shikimate is bound by residues 19–21 (SFS) and T66. K70 acts as the Proton acceptor in catalysis. NADP(+) is bound at residue D82. N91 and D106 together coordinate shikimate. NADP(+) contacts are provided by residues 130-134 (GSGGS) and I226. Y228 is a binding site for shikimate. G249 serves as a coordination point for NADP(+).

Belongs to the shikimate dehydrogenase family. In terms of assembly, homodimer.

The catalysed reaction is shikimate + NADP(+) = 3-dehydroshikimate + NADPH + H(+). It participates in metabolic intermediate biosynthesis; chorismate biosynthesis; chorismate from D-erythrose 4-phosphate and phosphoenolpyruvate: step 4/7. In terms of biological role, involved in the biosynthesis of the chorismate, which leads to the biosynthesis of aromatic amino acids. Catalyzes the reversible NADPH linked reduction of 3-dehydroshikimate (DHSA) to yield shikimate (SA). The polypeptide is Shikimate dehydrogenase (NADP(+)) (Methanococcus vannielii (strain ATCC 35089 / DSM 1224 / JCM 13029 / OCM 148 / SB)).